The chain runs to 906 residues: Protein translocase subunit SecA (906 aa).

ATP contacts are provided by residues Q89, 107–111, and D501; that span reads GEGKT. 4 residues coordinate Zn(2+): C891, C893, C902, and H903.

It belongs to the SecA family. As to quaternary structure, monomer and homodimer. Part of the essential Sec protein translocation apparatus which comprises SecA, SecYEG and auxiliary proteins SecDF-YajC and YidC. Zn(2+) is required as a cofactor.

The protein resides in the cell inner membrane. Its subcellular location is the cytoplasm. It catalyses the reaction ATP + H2O + cellular proteinSide 1 = ADP + phosphate + cellular proteinSide 2.. Functionally, part of the Sec protein translocase complex. Interacts with the SecYEG preprotein conducting channel. Has a central role in coupling the hydrolysis of ATP to the transfer of proteins into and across the cell membrane, serving both as a receptor for the preprotein-SecB complex and as an ATP-driven molecular motor driving the stepwise translocation of polypeptide chains across the membrane. The polypeptide is Protein translocase subunit SecA (Parvibaculum lavamentivorans (strain DS-1 / DSM 13023 / NCIMB 13966)).